The sequence spans 308 residues: Ribonuclease H2 subunit B (308 aa).

N-acetylalanine is present on alanine 2. Lysine 292 carries the N6-acetyllysine modification. The residue at position 293 (serine 293) is a Phosphoserine.

It belongs to the RNase H2 subunit B family. In terms of assembly, the RNase H2 complex is a heterotrimer composed of the catalytic subunit RNASEH2A and the non-catalytic subunits RNASEH2B and RNASEH2C.

The protein localises to the nucleus. Non catalytic subunit of RNase H2, an endonuclease that specifically degrades the RNA of RNA:DNA hybrids. Participates in DNA replication, possibly by mediating the removal of lagging-strand Okazaki fragment RNA primers during DNA replication. Mediates the excision of single ribonucleotides from DNA:RNA duplexes. The sequence is that of Ribonuclease H2 subunit B (Rnaseh2b) from Mus musculus (Mouse).